Here is a 315-residue protein sequence, read N- to C-terminus: PIH1 domain-containing protein 2 (315 aa).

Belongs to the PIH1 family.

This chain is PIH1 domain-containing protein 2 (PIH1D2), found in Bos taurus (Bovine).